A 640-amino-acid chain; its full sequence is 1,4-alpha-glucan branching enzyme GlgB (640 aa).

The Nucleophile role is filled by Asp-318. Residue Glu-371 is the Proton donor of the active site.

The protein belongs to the glycosyl hydrolase 13 family. GlgB subfamily. As to quaternary structure, monomer.

It carries out the reaction Transfers a segment of a (1-&gt;4)-alpha-D-glucan chain to a primary hydroxy group in a similar glucan chain.. The protein operates within glycan biosynthesis; glycogen biosynthesis. Its function is as follows. Catalyzes the formation of the alpha-1,6-glucosidic linkages in glycogen by scission of a 1,4-alpha-linked oligosaccharide from growing alpha-1,4-glucan chains and the subsequent attachment of the oligosaccharide to the alpha-1,6 position. The protein is 1,4-alpha-glucan branching enzyme GlgB of Francisella tularensis subsp. holarctica (strain FTNF002-00 / FTA).